The primary structure comprises 107 residues: UPF0145 protein CHY_0465 (107 aa).

The protein belongs to the UPF0145 family.

This is UPF0145 protein CHY_0465 from Carboxydothermus hydrogenoformans (strain ATCC BAA-161 / DSM 6008 / Z-2901).